A 279-amino-acid chain; its full sequence is Tryptophan 2,3-dioxygenase (279 aa).

Substrate is bound by residues 48–52 (FIVIH), Tyr-110, and Arg-114. His-237 lines the heme pocket. Thr-251 provides a ligand contact to substrate.

Belongs to the tryptophan 2,3-dioxygenase family. In terms of assembly, homotetramer. Requires heme as cofactor.

It carries out the reaction L-tryptophan + O2 = N-formyl-L-kynurenine. It functions in the pathway amino-acid degradation; L-tryptophan degradation via kynurenine pathway; L-kynurenine from L-tryptophan: step 1/2. In terms of biological role, heme-dependent dioxygenase that catalyzes the oxidative cleavage of the L-tryptophan (L-Trp) pyrrole ring and converts L-tryptophan to N-formyl-L-kynurenine. Catalyzes the oxidative cleavage of the indole moiety. The protein is Tryptophan 2,3-dioxygenase of Exiguobacterium sibiricum (strain DSM 17290 / CCUG 55495 / CIP 109462 / JCM 13490 / 255-15).